Consider the following 297-residue polypeptide: Thiosulfate sulfurtransferase (297 aa).

At K14 the chain carries N6-acetyllysine; alternate. Position 14 is an N6-succinyllysine; alternate (K14). The 119-residue stretch at 25-143 (VGPSLRVLDA…WLKEGHPVTS (119 aa)) folds into the Rhodanese 1 domain. The O-linked (GlcNAc) serine glycan is linked to S35. Phosphoserine is present on S38. K136 bears the N6-acetyllysine; alternate mark. Position 136 is an N6-succinyllysine; alternate (K136). The segment at 144 to 159 (EPSRPEPAVFKATLNR) is hinge. K163 carries the post-translational modification N6-acetyllysine. The Rhodanese 2 domain maps to 173–288 (QSKRFQLVDS…WFRRAPPETR (116 aa)). Residue K175 is modified to N6-acetyllysine; alternate. K175 is subject to N6-succinyllysine; alternate. Position 187 (R187) interacts with substrate. K224 is subject to N6-acetyllysine; alternate. An N6-succinyllysine; alternate modification is found at K224. K236 carries the post-translational modification N6-acetyllysine. K237 is modified (N6-acetyllysine; alternate). An N6-succinyllysine; alternate modification is found at K237. C248 serves as the catalytic Cysteine persulfide intermediate. K250 lines the substrate pocket.

Monomer. As to expression, expressed in numerous tissues.

It is found in the mitochondrion matrix. The catalysed reaction is thiosulfate + hydrogen cyanide = thiocyanate + sulfite + 2 H(+). Its function is as follows. Together with MRPL18, acts as a mitochondrial import factor for the cytosolic 5S rRNA. Only the nascent unfolded cytoplasmic form is able to bind to the 5S rRNA. Involved in the formation of iron-sulfur complexes, cyanide detoxification or modification of sulfur-containing enzymes. Other thiol compounds, besides cyanide, can act as sulfur ion acceptors. Also has weak mercaptopyruvate sulfurtransferase (MST) activity. The protein is Thiosulfate sulfurtransferase (Tst) of Rattus norvegicus (Rat).